A 300-amino-acid chain; its full sequence is Pantothenate synthetase (300 aa).

Residue 30–37 (MGYLHEGH) participates in ATP binding. Catalysis depends on His-37, which acts as the Proton donor. Position 61 (Gln-61) interacts with (R)-pantoate. A beta-alanine-binding site is contributed by Gln-61. 147–150 (GMKD) contributes to the ATP binding site. Gln-153 serves as a coordination point for (R)-pantoate. ATP contacts are provided by residues Val-176 and 184–187 (KSSR).

The protein belongs to the pantothenate synthetase family. As to quaternary structure, homodimer.

The protein resides in the cytoplasm. The catalysed reaction is (R)-pantoate + beta-alanine + ATP = (R)-pantothenate + AMP + diphosphate + H(+). It functions in the pathway cofactor biosynthesis; (R)-pantothenate biosynthesis; (R)-pantothenate from (R)-pantoate and beta-alanine: step 1/1. In terms of biological role, catalyzes the condensation of pantoate with beta-alanine in an ATP-dependent reaction via a pantoyl-adenylate intermediate. The polypeptide is Pantothenate synthetase (Geobacillus kaustophilus (strain HTA426)).